The chain runs to 435 residues: uncharacterized protein (435 aa).

Q261, Y294, E318, and D366 together coordinate S-adenosyl-L-methionine. C393 (nucleophile) is an active-site residue.

This sequence belongs to the class I-like SAM-binding methyltransferase superfamily. RNA M5U methyltransferase family.

This is an uncharacterized protein from Bifidobacterium longum (strain NCC 2705).